The primary structure comprises 1409 residues: Protein three rows (1409 aa).

The separase cleavage-site stretch occupies residues 1052–1058 (VEPIRKQ). Disordered regions lie at residues 1260–1284 (PIGCSNSSSSSSKSGNENTPPSDHV) and 1297–1409 (DDAA…RQRN). 2 stretches are compositionally biased toward low complexity: residues 1264–1273 (SNSSSSSSKS) and 1300–1310 (ASVSASTPAPS).

In terms of assembly, interacts with pim and Sse. Cleavage of thr contributes to inactivation of Sse.

It is found in the cytoplasm. In terms of biological role, required specifically for chromosome disjunction during all mitoses; maternally provided protein is sufficient until mitosis 14 then zygotic protein is required. Involved in formation and/or maintenance of epithelial structures: bud extension during Malpighian tubule development, and foregut and hindgut morphogenesis. The chain is Protein three rows (thr) from Drosophila pseudoobscura pseudoobscura (Fruit fly).